Consider the following 413-residue polypeptide: MHFINEFINRGYFYQSTDLTRLTQISNSSQIVAYIGFDCTAQSLHVGNLMQIMILRLLQQCGHKSIVVIGGATTKIGDPSEKDKLRRIITNDEIQQNISGIKRSLKKFIKFDETKNDVLLLNNQEWLDSINYINFLRDYGRAFSVNKMLTMNSVKSRLERHTPLSFLEFNYMLLQAYDFYYLNKYYNCNLQIGGSDQWGNITMGVDLVKKLSNNEVFGLTTPLITNSSGEKMGKTADGAVWLNEDMCSPYNYFQYWRNIEDNDVIRFAKLYGEFSEVELSKLTELFFNNVNEAKKQIAYKITLLCHGRDEANKALNTAIQMFEHKKADENLPTFTIKDCNNLKVGIPITELLVTIGLAKTKSEGKRLIQGNGIRINNIKVNNINLVVQLHDFIDQVITVSLGKKCHILVKIAK.

Residue tyrosine 34 coordinates L-tyrosine. The short motif at 39 to 48 (CTAQSLHVGN) is the 'HIGH' region element. 2 residues coordinate L-tyrosine: tyrosine 171 and glutamine 175. The 'KMSKS' region signature appears at 231–235 (KMGKT). ATP is bound at residue lysine 234. An S4 RNA-binding domain is found at 346–411 (IPITELLVTI…GKKCHILVKI (66 aa)).

The protein belongs to the class-I aminoacyl-tRNA synthetase family. TyrS type 1 subfamily. In terms of assembly, homodimer.

It localises to the cytoplasm. The enzyme catalyses tRNA(Tyr) + L-tyrosine + ATP = L-tyrosyl-tRNA(Tyr) + AMP + diphosphate + H(+). Its function is as follows. Catalyzes the attachment of tyrosine to tRNA(Tyr) in a two-step reaction: tyrosine is first activated by ATP to form Tyr-AMP and then transferred to the acceptor end of tRNA(Tyr). The sequence is that of Tyrosine--tRNA ligase from Orientia tsutsugamushi (strain Ikeda) (Rickettsia tsutsugamushi).